We begin with the raw amino-acid sequence, 317 residues long: Olfactory receptor 2T27 (317 aa).

Topologically, residues 1–22 (MEQSNYSVYADFILLGLFSNAR) are extracellular. An N-linked (GlcNAc...) asparagine glycan is attached at Asn5. The helical transmembrane segment at 23 to 43 (FPWLLFALILLVFLTSIASNV) threads the bilayer. The Cytoplasmic portion of the chain corresponds to 44 to 60 (VKIILIHIDSRLHTPMY). A helical membrane pass occupies residues 61–83 (FLLSQLSLRDILYISTIVPKMLV). Residues 84–97 (DQVMSQRAISFAGC) lie on the Extracellular side of the membrane. Cys97 and Cys189 are oxidised to a cystine. Residues 98–118 (TAQHFLYLTLAGAEFFLLGLM) form a helical membrane-spanning segment. Residues 119-139 (SYDRYVAICNPLHYPVLMSRK) are Cytoplasmic-facing. Residues 140–160 (ICWLIVAAAWLGGSIDGFLLT) traverse the membrane as a helical segment. At 161–197 (PVTMQFPFCASREINHFFCEVPALLKLSCTDTSAYET) the chain is on the extracellular side. A helical membrane pass occupies residues 198 to 218 (AMYVCCIMMLLIPFSVISGSY). Topologically, residues 219–244 (TRILITVYRMSEAEGRGKAVATCSSH) are cytoplasmic. The helical transmembrane segment at 245–265 (MVVVSLFYGAAMYTYVLPHSY) threads the bilayer. Over 266 to 271 (HTPEQD) the chain is Extracellular. A helical transmembrane segment spans residues 272–292 (KAVSAFYTILTPMLNPLIYSL). At 293 to 317 (RNKDVTGALQKVVGRCVSSGKVTTF) the chain is on the cytoplasmic side.

Belongs to the G-protein coupled receptor 1 family.

The protein localises to the cell membrane. Odorant receptor. This Homo sapiens (Human) protein is Olfactory receptor 2T27 (OR2T27).